The following is a 229-amino-acid chain: Cytidylate kinase (229 aa).

Position 7-15 (7-15) interacts with ATP; it reads GPAGAGKSS.

This sequence belongs to the cytidylate kinase family. Type 1 subfamily.

The protein resides in the cytoplasm. It catalyses the reaction CMP + ATP = CDP + ADP. It carries out the reaction dCMP + ATP = dCDP + ADP. The polypeptide is Cytidylate kinase (Rhodopirellula baltica (strain DSM 10527 / NCIMB 13988 / SH1)).